The chain runs to 352 residues: Thymidine kinase (352 aa).

32–39 (GVYGIGKS) contributes to the ATP binding site. Glu60 (proton acceptor) is an active-site residue. 2 residues coordinate substrate: Tyr78 and Gln102. Arg192 serves as a coordination point for ATP. Arg198 provides a ligand contact to substrate.

This sequence belongs to the herpesviridae thymidine kinase family. As to quaternary structure, homodimer.

The catalysed reaction is thymidine + ATP = dTMP + ADP + H(+). Catalyzes the transfer of the gamma-phospho group of ATP to thymidine to generate dTMP in the salvage pathway of pyrimidine synthesis. The dTMP serves as a substrate for DNA polymerase during viral DNA replication. Allows the virus to be reactivated and to grow in non-proliferative cells lacking a high concentration of phosphorylated nucleic acid precursors. This Equus caballus (Horse) protein is Thymidine kinase.